Here is a 725-residue protein sequence, read N- to C-terminus: MAMAMSDSGASRLRRQLESGGFEARLYVKQLSQQSDGDRDLQEHRQRIQALAEETAQNLKRNVYQNYRQFIETAREISYLESEMYQLSHLLTEQKSSLESIPLTLLPAAAAAGAAAASGGEEGVGGAGGRDHLRGQAGFFSTPGGASRDGSGPGEEGKQRTLTTLLEKVEGCRHLLETPGQYLVYNGDLVEYDADHMAQLQRVHGFLMNDCLLVATWLPQRRGMYRYNALYSLDGLAVVNVKDNPPMKDMFKLLMFPESRIFQAENAKIKREWLEVLEDTKRALSEKRRREQEEAAAPRGPPQVTSKATNPFEDDEEEEPAVPEVEEEKVDLSMEWIQELPEDLDVCIAQRDFEGAVDLLDKLNHYLEDKPSPPPVKELRAKVEERVRQLTEVLVFELSPDRSLRGGPKATRRAVSQLIRLGQCTKACELFLRNRAAAVHTAIRQLRIEGATLLYIHKLCHVFFTSLLETAREFEIDFAGTDSGCYSAFVVWARSAMGMFVDAFSKQVFDSKESLSTAAECVKVAKEHCQQLGDIGLDLTFIIHALLVKDIQGALHSYKEIIIEATKHRNSEEMWRRMNLMTPEALGKLKEEMKSCGVSNFEQYTGDDCWVNLSYTVVAFTKQTMGFLEEALKLYFPELHMVLLESLVEIILVAVQHVDYSLRCEQDPEKKAFIRQNASFLYETVLPVVEKRFEEGVGKPAKQLQDLRNASRLIRVNPESTTSVV.

S19 bears the Phosphoserine mark. A disordered region spans residues 137–159 (AGFFSTPGGASRDGSGPGEEGKQ). The residue at position 142 (T142) is a Phosphothreonine. The PH domain occupies 182 to 282 (YLVYNGDLVE…WLEVLEDTKR (101 aa)). The tract at residues 285 to 328 (SEKRRREQEEAAAPRGPPQVTSKATNPFEDDEEEEPAVPEVEEE) is disordered. Acidic residues predominate over residues 312-328 (FEDDEEEEPAVPEVEEE).

This sequence belongs to the EXO84 family. The exocyst complex is composed of EXOC1, EXOC2, EXOC3, EXOC4, EXOC5, EXOC6, EXOC7 and EXOC8. Interacts (via PH domain) with GTP-bound RALA and RALB. Interacts with SH3BP1; required for the localization of both SH3BP1 and the exocyst to the leading edge of migrating cells.

The protein resides in the cytoplasm. It is found in the perinuclear region. It localises to the cell projection. The protein localises to the growth cone. Component of the exocyst complex involved in the docking of exocytic vesicles with fusion sites on the plasma membrane. This Homo sapiens (Human) protein is Exocyst complex component 8 (EXOC8).